Consider the following 197-residue polypeptide: MEDINRLLQIRKTVLQMLSDREYIITAYEQEYPRESFVSRENLTMYCVKKDDPTDSIYVFFPDTPKVGVTQIKKYVDIMKDRQANRAIIVVQQNITPFAKQALAEFSQEKKITLEQFNEAELLVNITHHQLVPKHILLTKEEKLELLTRYKMKESQLPRIQTNDPVARYYGLSRGHVVKIVRPSETAGRYITYRLCV.

The protein belongs to the archaeal Rpo5/eukaryotic RPB5 RNA polymerase subunit family. Component of the RNA polymerase I (Pol I), RNA polymerase II (Pol II) and RNA polymerase III (Pol III) complexes consisting of at least 13, 12 and 17 subunits, respectively. In RNA Pol II, this subunit is present in 2-fold molar excess over the other subunits.

The protein resides in the nucleus. Functionally, DNA-dependent RNA polymerase catalyzes the transcription of DNA into RNA using the four ribonucleoside triphosphates as substrates. Common component of RNA polymerases I, II and III which synthesize ribosomal RNA precursors, mRNA precursors and many functional non-coding RNAs, and small RNAs, such as 5S rRNA and tRNAs, respectively. Pol II is the central component of the basal RNA polymerase II transcription machinery. Pols are composed of mobile elements that move relative to each other. In Pol II, RPB5 is part of the lower jaw surrounding the central large cleft and thought to grab the incoming DNA template. Seems to be the major component in this process. This Dictyostelium discoideum (Social amoeba) protein is DNA-directed RNA polymerases I, II, and III subunit rpabc1 (polr2e).